We begin with the raw amino-acid sequence, 565 residues long: Proline--tRNA ligase (565 aa).

Belongs to the class-II aminoacyl-tRNA synthetase family. ProS type 1 subfamily. As to quaternary structure, homodimer.

It localises to the cytoplasm. It carries out the reaction tRNA(Pro) + L-proline + ATP = L-prolyl-tRNA(Pro) + AMP + diphosphate. Its function is as follows. Catalyzes the attachment of proline to tRNA(Pro) in a two-step reaction: proline is first activated by ATP to form Pro-AMP and then transferred to the acceptor end of tRNA(Pro). As ProRS can inadvertently accommodate and process non-cognate amino acids such as alanine and cysteine, to avoid such errors it has two additional distinct editing activities against alanine. One activity is designated as 'pretransfer' editing and involves the tRNA(Pro)-independent hydrolysis of activated Ala-AMP. The other activity is designated 'posttransfer' editing and involves deacylation of mischarged Ala-tRNA(Pro). The misacylated Cys-tRNA(Pro) is not edited by ProRS. This chain is Proline--tRNA ligase, found in Lactobacillus delbrueckii subsp. bulgaricus (strain ATCC BAA-365 / Lb-18).